Consider the following 260-residue polypeptide: UPF0246 protein Bcenmc03_2247 (260 aa).

The protein belongs to the UPF0246 family.

The sequence is that of UPF0246 protein Bcenmc03_2247 from Burkholderia orbicola (strain MC0-3).